The sequence spans 1416 residues: 1-phosphatidylinositol 4,5-bisphosphate phosphodiesterase eta-2 (1416 aa).

A necessary for plasma membrane localization region spans residues 1 to 155; that stretch reads MSGPWPSPDS…WVTGLRYLMA (155 aa). Residues 47 to 155 enclose the PH domain; that stretch reads GAMQEGMQMV…WVTGLRYLMA (109 aa). EF-hand domains are found at residues 169–204 and 205–241; these read TRDQ…LNVN and LPRQ…MSTR. Positions 182, 184, 186, 188, and 193 each coordinate Ca(2+). The PI-PLC X-box domain occupies 326–471; that stretch reads QDMTQPLSHY…LKGKILVKGK (146 aa). H341 is an active-site residue. Residues N342, E371, and D373 each contribute to the Ca(2+) site. H385 is an active-site residue. E420 contacts Ca(2+). Substrate is bound by residues K469 and K471. S487 and S491 each carry phosphoserine. Positions 535–620 are disordered; that stretch reads DPNNFSVSTL…RGATRQKKTM (86 aa). The segment covering 537-546 has biased composition (polar residues); it reads NNFSVSTLSP. The segment covering 581–592 has biased composition (basic residues); that stretch reads SRRKKKGSKLKK. S595 and S605 each carry phosphoserine. The PI-PLC Y-box domain occupies 626–740; it reads LSDLVKYTKS…GYVLKPGCMC (115 aa). Residues S653 and R680 each coordinate substrate. One can recognise a C2 domain in the interval 740–869; sequence CQGVFNPNSE…PGYRHVYLEG (130 aa). Residues I784, D786, D810, D839, H840, and D841 each contribute to the Ca(2+) site. Disordered regions lie at residues 905-1109, 1121-1222, and 1315-1405; these read GSLD…GGWR, YSDA…LQPR, and ITSP…GPAS. Residues 1011-1021 show a composition bias toward pro residues; sequence APGPGPPPPAA. A compositionally biased stretch (polar residues) spans 1073–1083; it reads GSQTDGRSQPR. Low complexity predominate over residues 1143–1166; the sequence is VSSSSSMSSSDTVIDLSLPSLGLG. Residues 1199–1208 are compositionally biased toward polar residues; that stretch reads KSKSNPNLRA. Gly residues predominate over residues 1324-1333; the sequence is AGEGVAGGPG.

It depends on Ca(2+) as a cofactor. As to expression, expressed in retina and kidney.

The protein resides in the cytoplasm. The protein localises to the cell membrane. The catalysed reaction is a 1,2-diacyl-sn-glycero-3-phospho-(1D-myo-inositol-4,5-bisphosphate) + H2O = 1D-myo-inositol 1,4,5-trisphosphate + a 1,2-diacyl-sn-glycerol + H(+). Activity is stimulated by GNB1:GNG2. Its function is as follows. The production of the second messenger molecules diacylglycerol (DAG) and inositol 1,4,5-trisphosphate (IP3) is mediated by activated phosphatidylinositol-specific phospholipase C enzymes. This phospholipase activity is very sensitive to calcium. May be important for formation and maintenance of the neuronal network in the postnatal brain. This chain is 1-phosphatidylinositol 4,5-bisphosphate phosphodiesterase eta-2, found in Homo sapiens (Human).